We begin with the raw amino-acid sequence, 683 residues long: Cyclic nucleotide-gated channel alpha-1 (683 aa).

Topologically, residues 1–160 (MKTNIINTWH…PSGNMYYNWL (160 aa)) are cytoplasmic. Positions 34–144 (ACSSFSDNDN…PKEKKEEEKK (111 aa)) are disordered. Residues 105 to 144 (SKADDKKESKKDPEKKKKKEKEKEKKKEEKPKEKKEEEKK) are compositionally biased toward basic and acidic residues. Residues 161-182 (FCITLPVMYNWTMIIARACFDE) form a helical membrane-spanning segment. Topologically, residues 183-192 (LQSDYLEYWL) are extracellular. Residues 193–213 (IFDYVSDVVYLADMFVRTRTG) form a helical membrane-spanning segment. At 214–238 (YLEQGLLVKDELKLIEKYKANLQFK) the chain is on the cytoplasmic side. The helical transmembrane segment at 239 to 257 (LDVLSVIPTDLLYFKFGWN) threads the bilayer. Topologically, residues 258 to 262 (YPEIR) are extracellular. A helical membrane pass occupies residues 263 to 281 (LNRLLRISRMFEFFQRTET). At 282-288 (RTNYPNI) the chain is on the cytoplasmic side. An ion conduction pathway region spans residues 286–394 (PNIFRISNLV…GNIGSMISNM (109 aa)). The helical transmembrane segment at 289 to 312 (FRISNLVMYIVIIIHWNACVYYSI) threads the bilayer. Over 313–335 (SKAIGFGNDTWVYPDVNDPEFGR) the chain is Extracellular. N-linked (GlcNAc...) asparagine glycosylation occurs at asparagine 320. 2 helical membrane passes run 336–370 (LARK…VFVV) and 371–395 (VDFL…SNMN). Residues 353–356 (TIGE) form a selectivity filter region. Residues 396–472 (AARAEFQSRV…DTLKKVRIFA (77 aa)) form a C-linker region. The Cytoplasmic portion of the chain corresponds to 396-683 (AARAEFQSRV…ESEPTESLQG (288 aa)). The cyclic nucleotide-binding domain stretch occupies residues 476–596 (AGLLVELVLK…EEKGRQILMK (121 aa)). The 3',5'-cyclic GMP site is built by glycine 536, serine 539, arginine 552, and threonine 553. Positions 552 and 553 each coordinate 3',5'-cyclic AMP. The stretch at 614–668 (LEEKVTRMEGSVDLLQTRFARILAEYESMQQKLKQRLTKVEKFLKPLIETEFSAL) forms a coiled coil.

The protein belongs to the cyclic nucleotide-gated cation channel (TC 1.A.1.5) family. CNGA1 subfamily. In terms of assembly, forms heterotetrameric channels composed of CNGA1 and CNGB1 subunits with 3:1 stoichiometry. May also form cyclic nucleotide-activated homotetrameric channels, that are efficiently activated by saturating cGMP, but poorly activated by saturating cAMP compared to the heterotetramer with CNGB1. The channel binds Ca(2+)-bound CALM1 via CaM1 and CaM2 regions of the CNGB1 subunit; this interaction modulates the affinity of the channel for cNMPs in response to intracellular Ca(2+) levels. In terms of tissue distribution, rod cells in the retina.

The protein resides in the cell membrane. The catalysed reaction is Ca(2+)(in) = Ca(2+)(out). It catalyses the reaction Na(+)(in) = Na(+)(out). The enzyme catalyses K(+)(in) = K(+)(out). It carries out the reaction NH4(+)(in) = NH4(+)(out). The catalysed reaction is Rb(+)(in) = Rb(+)(out). It catalyses the reaction Li(+)(in) = Li(+)(out). The enzyme catalyses Cs(+)(in) = Cs(+)(out). Its function is as follows. Pore-forming subunit of the rod cyclic nucleotide-gated channel. Mediates rod photoresponses at dim light converting transient changes in intracellular cGMP levels into electrical signals. In the dark, cGMP levels are high and keep the channel open enabling a steady inward current carried by Na(+) and Ca(2+) ions that leads to membrane depolarization and neurotransmitter release from synaptic terminals. Upon photon absorption cGMP levels decline leading to channel closure and membrane hyperpolarization that ultimately slows neurotransmitter release and signals the presence of light, the end point of the phototransduction cascade. Conducts cGMP- and cAMP-gated ion currents, with permeability for monovalent and divalent cations. The selectivity for Ca(2+) over Na(+) increases with cGMP concentrations, whereas the selectivity among monovalent ions is independent of the cGMP levels. The sequence is that of Cyclic nucleotide-gated channel alpha-1 from Rattus norvegicus (Rat).